Consider the following 536-residue polypeptide: Vacuolar segregation protein pep7 (536 aa).

The interval 1–31 (MQNGKRRIGVRISSNLSNHSGTNLSTSAQSD) is disordered. Polar residues predominate over residues 12–31 (ISSNLSNHSGTNLSTSAQSD). The C2H2-type zinc-finger motif lies at 39–62 (TECPICGLELPNLSALNDHLDVTH). An FYVE-type 1; degenerate zinc finger spans residues 136 to 201 (PDMVCHDPMC…VCRECYEGRP (66 aa)). 12 residues coordinate Zn(2+): Cys158, Cys161, Cys193, Cys196, Cys281, Cys284, Cys297, Cys300, Cys305, Cys308, Cys324, and Cys327. The FYVE-type 2 zinc finger occupies 275–332 (DSVVQICPECNNSFTLTRRRRHCRLCGRVICRFCVLEISLPQHPQPLLICMSCNQNYF).

In terms of biological role, required for vacuole segregation and vacuole protein sorting. Possibly part of a complex which tethers the vacuole membrane to microtubules, either directly or via kinesin or dynein-like motor proteins. Probably functions in several interorganelle traffic pathways. The polypeptide is Vacuolar segregation protein pep7 (pep7) (Schizosaccharomyces pombe (strain 972 / ATCC 24843) (Fission yeast)).